A 587-amino-acid polypeptide reads, in one-letter code: Aspartate--tRNA ligase (587 aa).

Position 173 (E173) interacts with L-aspartate. Residues 197–200 (QTLK) form an aspartate region. L-aspartate is bound at residue R219. ATP contacts are provided by residues 219-221 (RDE) and Q228. H446 is an L-aspartate binding site. E480 contacts ATP. R487 is an L-aspartate binding site. Residue 532 to 535 (GLDR) participates in ATP binding.

It belongs to the class-II aminoacyl-tRNA synthetase family. Type 1 subfamily. In terms of assembly, homodimer.

The protein resides in the cytoplasm. It carries out the reaction tRNA(Asp) + L-aspartate + ATP = L-aspartyl-tRNA(Asp) + AMP + diphosphate. Functionally, catalyzes the attachment of L-aspartate to tRNA(Asp) in a two-step reaction: L-aspartate is first activated by ATP to form Asp-AMP and then transferred to the acceptor end of tRNA(Asp). The sequence is that of Aspartate--tRNA ligase from Phocaeicola vulgatus (strain ATCC 8482 / DSM 1447 / JCM 5826 / CCUG 4940 / NBRC 14291 / NCTC 11154) (Bacteroides vulgatus).